The following is a 236-amino-acid chain: Orotidine 5'-phosphate decarboxylase (236 aa).

Substrate is bound by residues Asp12, Lys34, 60 to 69, Thr123, Arg184, Gln193, Gly213, and Arg214; that span reads DLKLHDIPHT. Lys62 acts as the Proton donor in catalysis.

The protein belongs to the OMP decarboxylase family. Type 1 subfamily. Homodimer.

It carries out the reaction orotidine 5'-phosphate + H(+) = UMP + CO2. The protein operates within pyrimidine metabolism; UMP biosynthesis via de novo pathway; UMP from orotate: step 2/2. Functionally, catalyzes the decarboxylation of orotidine 5'-monophosphate (OMP) to uridine 5'-monophosphate (UMP). In Gluconobacter oxydans (strain 621H) (Gluconobacter suboxydans), this protein is Orotidine 5'-phosphate decarboxylase.